Consider the following 474-residue polypeptide: Trehalose-6-phosphate synthase (474 aa).

Residue arginine 10 coordinates D-glucose 6-phosphate. 22 to 23 lines the UDP-alpha-D-glucose pocket; it reads GG. The D-glucose 6-phosphate site is built by tyrosine 77 and aspartate 131. The UDP-alpha-D-glucose site is built by arginine 263 and lysine 268. Position 301 (arginine 301) interacts with D-glucose 6-phosphate. UDP-alpha-D-glucose contacts are provided by residues phenylalanine 340 and 366-370; that span reads LVAKE.

The protein belongs to the glycosyltransferase 20 family. As to quaternary structure, homotetramer.

It catalyses the reaction D-glucose 6-phosphate + UDP-alpha-D-glucose = alpha,alpha-trehalose 6-phosphate + UDP + H(+). The protein operates within glycan biosynthesis; trehalose biosynthesis. In terms of biological role, probably involved in the osmoprotection via the biosynthesis of trehalose. Catalyzes the transfer of glucose from UDP-alpha-D-glucose (UDP-Glc) to D-glucose 6-phosphate (Glc-6-P) to form trehalose-6-phosphate. Acts with retention of the anomeric configuration of the UDP-sugar donor. This chain is Trehalose-6-phosphate synthase, found in Enterobacter sp. (strain 638).